A 256-amino-acid polypeptide reads, in one-letter code: uncharacterized protein (256 aa).

Residues 1 to 22 form the signal peptide; sequence MGYLKRIGMCISLLIVIIFVTS. The N-palmitoyl cysteine moiety is linked to residue C23. C23 carries the S-diacylglycerol cysteine lipid modification.

Belongs to the staphylococcal tandem lipoprotein family.

It is found in the cell membrane. This is an uncharacterized protein from Staphylococcus aureus (strain MRSA252).